We begin with the raw amino-acid sequence, 87 residues long: UPF0512 protein B (87 aa).

It belongs to the UPF0512 family.

The polypeptide is UPF0512 protein B (Dictyostelium discoideum (Social amoeba)).